We begin with the raw amino-acid sequence, 88 residues long: Conotoxin VxVIB (88 aa).

The signal sequence occupies residues 1–22 (MNLACVLIVAVLFLTASQLATA). Positions 23–52 (ASYARDKQEYPAVRSSDEMQDSEDLTLTKE) are excised as a propeptide. Cystine bridges form between cysteine 53–cysteine 68, cysteine 60–cysteine 72, and cysteine 67–cysteine 81.

In terms of tissue distribution, expressed by the venom duct.

The protein localises to the secreted. Functionally, may act as a neurotoxin, but produces no obvious effect on ionic currents when tested on the mouse dorsal rooted ganglia (DRG). The protein is Conotoxin VxVIB of Conus vexillum (Flag cone).